Here is a 288-residue protein sequence, read N- to C-terminus: Pantothenate synthetase (288 aa).

Position 30 to 37 (30 to 37 (MGFLHEGH)) interacts with ATP. Histidine 37 acts as the Proton donor in catalysis. Glutamine 61 is a (R)-pantoate binding site. Glutamine 61 contributes to the beta-alanine binding site. 147–150 (GLKD) contacts ATP. Residue glutamine 153 coordinates (R)-pantoate. ATP-binding positions include valine 176 and 184-187 (KSSR).

Belongs to the pantothenate synthetase family. As to quaternary structure, homodimer.

It is found in the cytoplasm. The enzyme catalyses (R)-pantoate + beta-alanine + ATP = (R)-pantothenate + AMP + diphosphate + H(+). The protein operates within cofactor biosynthesis; (R)-pantothenate biosynthesis; (R)-pantothenate from (R)-pantoate and beta-alanine: step 1/1. Functionally, catalyzes the condensation of pantoate with beta-alanine in an ATP-dependent reaction via a pantoyl-adenylate intermediate. The sequence is that of Pantothenate synthetase from Bacillus pumilus (strain SAFR-032).